The following is a 371-amino-acid chain: RT1 class I histocompatibility antigen, AA alpha chain (371 aa).

The first 24 residues, 1 to 24, serve as a signal peptide directing secretion; sequence MEAMAPRTLLLLLAAALAPTQTRA. An alpha-1 region spans residues 25 to 114; that stretch reads GSHSLRYFYT…LRGYYNQSEG (90 aa). Residues 25–311 are Extracellular-facing; it reads GSHSLRYFYT…PSTDSNMETT (287 aa). Residue Asn-110 is glycosylated (N-linked (GlcNAc...) asparagine). Residues 115 to 206 form an alpha-2 region; the sequence is GSHTIQEMYG…ELGKETLLRS (92 aa). An alpha-3 region spans residues 207 to 298; that stretch reads DPPEAHVTLH…GLPKPLSQRW (92 aa). An Ig-like C1-type domain is found at 209–295; the sequence is PEAHVTLHPR…EHEGLPKPLS (87 aa). N-linked (GlcNAc...) asparagine glycosylation is present at Asn-280. Residues 299–311 form a connecting peptide region; sequence EPSPSTDSNMETT. A helical membrane pass occupies residues 312-336; it reads VIYVILGAVAMIGAVAIIGAMVAVV. Residues 337–371 are Cytoplasmic-facing; it reads RRRKRNTGGKGGDYAPAPGRDSSQSSDVSLPDCKA. The disordered stretch occupies residues 342-371; it reads NTGGKGGDYAPAPGRDSSQSSDVSLPDCKA. Phosphoserine is present on residues Ser-362 and Ser-365.

This sequence belongs to the MHC class I family. Heterodimer of an alpha chain and a beta chain (beta-2-microglobulin).

It localises to the membrane. In terms of biological role, involved in the presentation of foreign antigens to the immune system. The chain is RT1 class I histocompatibility antigen, AA alpha chain from Rattus norvegicus (Rat).